Consider the following 1227-residue polypeptide: DNA-directed RNA polymerase subunit beta (1227 aa).

It belongs to the RNA polymerase beta chain family. The RNAP catalytic core consists of 2 alpha, 1 beta, 1 beta' and 1 omega subunit. When a sigma factor is associated with the core the holoenzyme is formed, which can initiate transcription.

It catalyses the reaction RNA(n) + a ribonucleoside 5'-triphosphate = RNA(n+1) + diphosphate. In terms of biological role, DNA-dependent RNA polymerase catalyzes the transcription of DNA into RNA using the four ribonucleoside triphosphates as substrates. In Chloroflexus aurantiacus (strain ATCC 29366 / DSM 635 / J-10-fl), this protein is DNA-directed RNA polymerase subunit beta.